The sequence spans 551 residues: uncharacterized protein (551 aa).

This sequence belongs to the GSP E family.

This is an uncharacterized protein from Methanocaldococcus jannaschii (strain ATCC 43067 / DSM 2661 / JAL-1 / JCM 10045 / NBRC 100440) (Methanococcus jannaschii).